The sequence spans 408 residues: Probable serine/threonine-protein kinase PBL16 (408 aa).

Gly-2 is lipidated: N-myristoyl glycine. Cys-4 carries S-palmitoyl cysteine lipidation. The tract at residues 17–50 (ANAKSESPKEQSPTVEDKHIKEVQKLPSNPKEVE) is disordered. Over residues 18–30 (NAKSESPKEQSPT) the composition is skewed to polar residues. Positions 31–40 (VEDKHIKEVQ) are enriched in basic and acidic residues. Phosphothreonine is present on Thr-65. The Protein kinase domain occupies 76–360 (FRQDRVLGGG…DIVDSLEPLQ (285 aa)). ATP is bound by residues 82 to 90 (LGGGGFGSV) and Lys-113. Tyr-159 bears the Phosphotyrosine mark. The active-site Proton acceptor is the Asp-209. Residues Ser-213 and Ser-243 each carry the phosphoserine modification. A phosphothreonine mark is found at Thr-244 and Thr-249. Tyr-257 carries the phosphotyrosine modification.

Belongs to the protein kinase superfamily. Ser/Thr protein kinase family. Palmitoylation at Cys-4 and Cys-6 are required for plasma membrane location.

Its subcellular location is the cell membrane. The catalysed reaction is L-seryl-[protein] + ATP = O-phospho-L-seryl-[protein] + ADP + H(+). The enzyme catalyses L-threonyl-[protein] + ATP = O-phospho-L-threonyl-[protein] + ADP + H(+). In terms of biological role, may be involved in plant defense signaling. The sequence is that of Probable serine/threonine-protein kinase PBL16 from Arabidopsis thaliana (Mouse-ear cress).